A 210-amino-acid chain; its full sequence is UPF0301 protein OCAR_7326/OCA5_c07920 (210 aa).

It belongs to the UPF0301 (AlgH) family.

This Afipia carboxidovorans (strain ATCC 49405 / DSM 1227 / KCTC 32145 / OM5) (Oligotropha carboxidovorans) protein is UPF0301 protein OCAR_7326/OCA5_c07920.